The chain runs to 932 residues: Protein translocase subunit SecA (932 aa).

Residues Gln86, 104–108, and Asp494 contribute to the ATP site; that span reads GEGKT. The segment at 857 to 932 is disordered; that stretch reads EDAGAEAHAS…KPAPKRKKRR (76 aa). The segment covering 905–915 has biased composition (polar residues); sequence TAGSAGDSNLP. Residues 920-932 are compositionally biased toward basic residues; the sequence is KTNKPAPKRKKRR.

It belongs to the SecA family. As to quaternary structure, monomer and homodimer. Part of the essential Sec protein translocation apparatus which comprises SecA, SecYEG and auxiliary proteins SecDF. Other proteins may also be involved.

The protein localises to the cell membrane. It is found in the cytoplasm. The enzyme catalyses ATP + H2O + cellular proteinSide 1 = ADP + phosphate + cellular proteinSide 2.. Its function is as follows. Part of the Sec protein translocase complex. Interacts with the SecYEG preprotein conducting channel. Has a central role in coupling the hydrolysis of ATP to the transfer of proteins into and across the cell membrane, serving as an ATP-driven molecular motor driving the stepwise translocation of polypeptide chains across the membrane. The chain is Protein translocase subunit SecA from Renibacterium salmoninarum (strain ATCC 33209 / DSM 20767 / JCM 11484 / NBRC 15589 / NCIMB 2235).